A 316-amino-acid polypeptide reads, in one-letter code: Long form salivary protein D7L1 (316 aa).

The N-terminal stretch at 1–23 is a signal peptide; the sequence is MSHTRAVVLAVACLCLILVQVEG. 4 cysteine pairs are disulfide-bonded: Cys40–Cys76, Cys72–Cys131, Cys181–Cys214, and Cys255–Cys266.

Belongs to the PBP/GOBP family.

Its subcellular location is the secreted. Functionally, modulates blood feeding of female mosquitoes on vertebrate species by binding and sequestering different mediators involved in the host response, such as biogenic amines and eicosanoids. Binds serotonin, tryptamine, histamine, leukotriene C4, leukotriene D4 and leukotriene E4. Does not bind octopamine, dopamine, noradrenaline, adrenaline and prostaglandin PGF2alpha. This is Long form salivary protein D7L1 from Anopheles atroparvus (European mosquito).